Reading from the N-terminus, the 373-residue chain is Autophagy-related protein 18 (373 aa).

Positions 142–163 (YPDSRDHEPRTEGESSSPNVSN) are disordered. Basic and acidic residues predominate over residues 144–154 (DSRDHEPRTEG). 3 WD repeats span residues 144–183 (DSRDHEPRTEGESSSPNVSNSAVSGQVILWDVINCKQITK), 186–226 (AHKD…RLYQ), and 231–270 (SLPAQIYSIAFHPDSSLLTVTSSTQTVHIFRLKEVYSNLE). Residues 227 to 231 (FRRGS) carry the L/FRRG motif motif.

Belongs to the WD repeat PROPPIN family. As to quaternary structure, component of the PI(3,5)P2 regulatory complex. Interacts with atg5.

It is found in the preautophagosomal structure membrane. It localises to the vacuole membrane. The protein resides in the endosome membrane. The PI(3,5)P2 regulatory complex regulates both the synthesis and turnover of phosphatidylinositol 3,5-bisphosphate (PtdIns(3,5)P2). Necessary for proper vacuole morphology. Plays an important role in osmotically-induced vacuole fragmentation. Required for cytoplasm to vacuole transport (Cvt) vesicle formation, pexophagy and starvation-induced autophagy. Involved in correct atg9 trafficking to the preautophagosomal structure. Might also be involved in premeiotic DNA replication. Required for the recruitment of the atg5-atg12/atg16 complex to the preautophagosomal structure. The chain is Autophagy-related protein 18 (atg18) from Schizosaccharomyces pombe (strain 972 / ATCC 24843) (Fission yeast).